A 332-amino-acid chain; its full sequence is uncharacterized protein (332 aa).

Positions 159 to 256 (PLEISGRGGN…PRPHPWGPGP (98 aa)) are disordered. Over residues 201–231 (RPPSPRPPSPRPPHPRPPSPRPPHPRPPSPR) the composition is skewed to pro residues.

Its subcellular location is the virion. This is an uncharacterized protein from Acanthamoeba polyphaga (Amoeba).